A 160-amino-acid chain; its full sequence is Cytochrome b6-f complex subunit 4 (160 aa).

Helical transmembrane passes span leucine 36–valine 56, leucine 95–glutamate 115, and threonine 131–isoleucine 151.

It belongs to the cytochrome b family. PetD subfamily. As to quaternary structure, the 4 large subunits of the cytochrome b6-f complex are cytochrome b6, subunit IV (17 kDa polypeptide, petD), cytochrome f and the Rieske protein, while the 4 small subunits are petG, petL, petM and petN. The complex functions as a dimer.

The protein resides in the plastid. It localises to the chloroplast thylakoid membrane. In terms of biological role, component of the cytochrome b6-f complex, which mediates electron transfer between photosystem II (PSII) and photosystem I (PSI), cyclic electron flow around PSI, and state transitions. The protein is Cytochrome b6-f complex subunit 4 of Solanum tuberosum (Potato).